The following is a 149-amino-acid chain: FAD synthase (149 aa).

Residues 9–10, 14–17, N92, and Y119 each bind ATP; these read TF and HPGH.

Belongs to the archaeal FAD synthase family. In terms of assembly, homodimer. A divalent metal cation serves as cofactor.

It catalyses the reaction FMN + ATP + H(+) = FAD + diphosphate. It functions in the pathway cofactor biosynthesis; FAD biosynthesis; FAD from FMN: step 1/1. Its function is as follows. Catalyzes the transfer of the AMP portion of ATP to flavin mononucleotide (FMN) to produce flavin adenine dinucleotide (FAD) coenzyme. The protein is FAD synthase of Methanoculleus marisnigri (strain ATCC 35101 / DSM 1498 / JR1).